The sequence spans 206 residues: MEKLYKENEGKPENERNLESEGKPEDEGSTEDEGKSDEEEKPDMEGKTECEGKREDEGEPGDEGQLEDEGNQEKQGKSEGEDKPQSEGKPASQAKPESQPRAAEKRPAEDYVPRKAKRKTDRGTDDSPKDSQEDLQERHLSSEEMMRECGDVSRAQEELRKKQKMGGFHWMQRDVQDPFAPRGQRGVRGVRGGGRGQKDLEDVPYV.

Positions 1-26 (MEKLYKENEGKPENERNLESEGKPED) are enriched in basic and acidic residues. Residues 1–206 (MEKLYKENEG…QKDLEDVPYV (206 aa)) are disordered. Over residues 27-42 (EGSTEDEGKSDEEEKP) the composition is skewed to acidic residues. Residues 43 to 56 (DMEGKTECEGKRED) show a composition bias toward basic and acidic residues. Acidic residues predominate over residues 57–70 (EGEPGDEGQLEDEG). 4 stretches are compositionally biased toward basic and acidic residues: residues 71–86 (NQEK…KPQS), 102–113 (AAEKRPAEDYVP), 121–160 (DRGT…EELR), and 196–206 (GQKDLEDVPYV).

Belongs to the TFS-II family. TFA subfamily.

Its subcellular location is the nucleus. Its function is as follows. May be involved in transcriptional regulation. The protein is Transcription elongation factor A protein-like 5 (TCEAL5) of Homo sapiens (Human).